The following is a 468-amino-acid chain: WD repeat-containing protein 55 homolog (468 aa).

Positions 1–107 are disordered; it reads MRNFNSPKFG…VPKRVIDDYD (107 aa). 3 stretches are compositionally biased toward acidic residues: residues 15–26, 41–58, and 67–91; these read DDSDDDDFDSGT, PITE…EYNP, and SDDE…DGED. WD repeat units follow at residues 134–173, 178–217, 221–259, 262–301, 304–343, and 388–427; these read KTED…CTIV, THTK…LKRF, AHEE…PVFK, EVED…MYVQ, PYEE…YHCD, and QHSL…EFDD.

This sequence belongs to the WD repeat WDR55 family.

The sequence is that of WD repeat-containing protein 55 homolog from Aedes aegypti (Yellowfever mosquito).